We begin with the raw amino-acid sequence, 55 residues long: Large ribosomal subunit protein bL33 (55 aa).

The protein belongs to the bacterial ribosomal protein bL33 family.

The protein is Large ribosomal subunit protein bL33 of Sphingopyxis alaskensis (strain DSM 13593 / LMG 18877 / RB2256) (Sphingomonas alaskensis).